The chain runs to 357 residues: Dihydroorotate dehydrogenase (quinone) (357 aa).

FMN is bound by residues 61-65 and Thr85; that span reads AGFDK. A substrate-binding site is contributed by Lys65. A substrate-binding site is contributed by 110–114; it reads NRFGF. FMN-binding residues include Asn141 and Asn172. Position 172 (Asn172) interacts with substrate. The Nucleophile role is filled by Ser175. Residue Asn177 coordinates substrate. Residues Lys217 and Gly245 each contribute to the FMN site. 246 to 247 is a binding site for substrate; that stretch reads NT. Residues Gly268, Gly297, and 318–319 each bind FMN; that span reads YS.

Belongs to the dihydroorotate dehydrogenase family. Type 2 subfamily. Monomer. Requires FMN as cofactor.

The protein resides in the cell membrane. It carries out the reaction (S)-dihydroorotate + a quinone = orotate + a quinol. It participates in pyrimidine metabolism; UMP biosynthesis via de novo pathway; orotate from (S)-dihydroorotate (quinone route): step 1/1. In terms of biological role, catalyzes the conversion of dihydroorotate to orotate with quinone as electron acceptor. This Xanthobacter autotrophicus (strain ATCC BAA-1158 / Py2) protein is Dihydroorotate dehydrogenase (quinone).